The chain runs to 80 residues: Metallothionein-like protein type 2, MT2-28 (80 aa).

This sequence belongs to the metallothionein superfamily. Type 15 family.

Metallothioneins have a high content of cysteine residues that bind various heavy metals. The sequence is that of Metallothionein-like protein type 2, MT2-28 from Brassica juncea (Indian mustard).